A 552-amino-acid chain; its full sequence is Scavenger receptor class B member 1 (552 aa).

Topologically, residues Met1–Ala11 are cytoplasmic. Residues Gly12 to Val32 form a helical membrane-spanning segment. Topologically, residues Pro33–Tyr443 are extracellular. Residues Asn102, Asn108, Asn173, Asn212, Asn227, Asn255, Asn310, Asn330, and Asn383 are each glycosylated (N-linked (GlcNAc...) asparagine). Cys251 and Cys384 are joined by a disulfide. Residues Tyr393 and Val458 each carry the phosphoserine modification. A helical transmembrane segment spans residues Ala444–Ile464. The S-palmitoyl cysteine moiety is linked to residue Cys462. Residues Arg465–Ser552 are Cytoplasmic-facing. Thr493 carries the phosphoserine modification.

The protein belongs to the CD36 family. The C-terminal region binds to PDZK1. In terms of assembly, (Microbial infection) Interacts with hepatitis C virus E1:E2 glycoproteins. N-glycosylated. In terms of processing, the six cysteines of the extracellular domain are all involved in intramolecular disulfide bonds. As to expression, widely expressed.

The protein localises to the cell membrane. The protein resides in the membrane. It is found in the caveola. Receptor for different ligands such as phospholipids, cholesterol ester, lipoproteins, phosphatidylserine and apoptotic cells. Receptor for HDL, mediating selective uptake of cholesteryl ether and HDL-dependent cholesterol efflux. Also facilitates the flux of free and esterified cholesterol between the cell surface and apoB-containing lipoproteins and modified lipoproteins, although less efficiently than HDL. May be involved in the phagocytosis of apoptotic cells, via its phosphatidylserine binding activity. Its function is as follows. (Microbial infection) Acts as a receptor for hepatitis C virus in hepatocytes and appears to facilitate its cell entry. Binding between SCARB1 and the hepatitis C virus glycoprotein E2 is independent of the genotype of the viral isolate. In terms of biological role, (Microbial infection) Mediates uptake of M.fortuitum, E.coli and S.aureus. Functionally, (Microbial infection) Facilitates the entry of human coronavirus SARS-CoV-2 by acting as an entry cofactor through HDL binding. In Homo sapiens (Human), this protein is Scavenger receptor class B member 1 (SCARB1).